We begin with the raw amino-acid sequence, 155 residues long: Large ribosomal subunit protein uL22 (155 aa).

Positions 109 to 155 (HITVIVESRPPKKAGKQGASASAARARRAQASKAATKKATDSKEGSE) are disordered. Over residues 146 to 155 (KATDSKEGSE) the composition is skewed to basic and acidic residues.

Belongs to the universal ribosomal protein uL22 family. Part of the 50S ribosomal subunit.

In terms of biological role, this protein binds specifically to 23S rRNA; its binding is stimulated by other ribosomal proteins, e.g. L4, L17, and L20. It is important during the early stages of 50S assembly. It makes multiple contacts with different domains of the 23S rRNA in the assembled 50S subunit and ribosome. Functionally, the globular domain of the protein is located near the polypeptide exit tunnel on the outside of the subunit, while an extended beta-hairpin is found that lines the wall of the exit tunnel in the center of the 70S ribosome. In Mycolicibacterium vanbaalenii (strain DSM 7251 / JCM 13017 / BCRC 16820 / KCTC 9966 / NRRL B-24157 / PYR-1) (Mycobacterium vanbaalenii), this protein is Large ribosomal subunit protein uL22.